A 1220-amino-acid chain; its full sequence is Polycomb protein Sfmbt (1220 aa).

The segment at proline 322–arginine 357 adopts an FCS-type zinc-finger fold. Residues cysteine 331, cysteine 334, cysteine 351, and cysteine 355 each coordinate Zn(2+). Disordered regions lie at residues glycine 371–serine 399 and aspartate 464–serine 483. Positions glutamate 473–leucine 482 are enriched in polar residues. 4 MBT repeats span residues tyrosine 536–proline 647, lysine 655–proline 753, leucine 761–proline 871, and phenylalanine 879–proline 975. Disordered stretches follow at residues proline 976 to lysine 1024 and asparagine 1050 to glycine 1092. Over residues lysine 991–lysine 1000 the composition is skewed to basic residues. The segment covering glutamine 1052–glycine 1068 has biased composition (acidic residues). The span at serine 1071 to glutamine 1082 shows a compositional bias: polar residues. The segment covering serine 1083 to glycine 1092 has biased composition (low complexity). The region spanning tryptophan 1140 to lysine 1203 is the SAM domain.

Interacts with pho as a component of the pho-repressive complex (PhoRC).

It localises to the nucleus. Polycomb group (PcG) protein that binds to the Polycomb response elements (PREs) found in the regulatory regions of many genes. PcG proteins act by forming multiprotein complexes, which are required to maintain the transcriptionally repressive state of homeotic genes throughout development. PcG proteins are not required to initiate repression, but to maintain it during later stages of development. They probably act via the methylation of histones, rendering chromatin heritably changed in its expressibility. Necessary but not sufficient to recruit a functional PcG repressive complex that represses target genes, suggesting that the recruitment of the distinct PRC1 complex is also required to allow a subsequent repression. In Drosophila melanogaster (Fruit fly), this protein is Polycomb protein Sfmbt.